Here is a 577-residue protein sequence, read N- to C-terminus: Arginine--tRNA ligase (577 aa).

The 'HIGH' region motif lies at 122–132 (PNVAKEMHVGH).

The protein belongs to the class-I aminoacyl-tRNA synthetase family. As to quaternary structure, monomer.

It is found in the cytoplasm. It carries out the reaction tRNA(Arg) + L-arginine + ATP = L-arginyl-tRNA(Arg) + AMP + diphosphate. The chain is Arginine--tRNA ligase from Shigella dysenteriae serotype 1 (strain Sd197).